A 160-amino-acid chain; its full sequence is Protein shisa-like-2B (160 aa).

Residues 65–85 (IGALIGLGIAALVLLAFVISV) traverse the membrane as a helical segment.

It belongs to the shisa family.

It is found in the membrane. In Homo sapiens (Human), this protein is Protein shisa-like-2B.